The chain runs to 141 residues: Large ribosomal subunit protein uL16 (141 aa).

A disordered region spans residues 1–21 (MLMPKRVKYRKQQRGHNRGMA).

It belongs to the universal ribosomal protein uL16 family. As to quaternary structure, part of the 50S ribosomal subunit.

Its function is as follows. Binds 23S rRNA and is also seen to make contacts with the A and possibly P site tRNAs. The protein is Large ribosomal subunit protein uL16 of Roseiflexus sp. (strain RS-1).